Reading from the N-terminus, the 240-residue chain is Late expression factor 5 homolog (240 aa).

This sequence belongs to the baculoviridae LEF-5 family.

Required for late and very late gene expression. The protein is Late expression factor 5 homolog of Tortricidae (ClGV).